Here is a 310-residue protein sequence, read N- to C-terminus: UDP-N-acetylenolpyruvoylglucosamine reductase (310 aa).

The FAD-binding PCMH-type domain maps to 23–188; the sequence is KVGGNAEIFF…LKAVFKVNKG (166 aa). Residue Arg-168 is part of the active site. Catalysis depends on Ser-217, which acts as the Proton donor. Glu-287 is a catalytic residue.

It belongs to the MurB family. Requires FAD as cofactor.

It is found in the cytoplasm. The catalysed reaction is UDP-N-acetyl-alpha-D-muramate + NADP(+) = UDP-N-acetyl-3-O-(1-carboxyvinyl)-alpha-D-glucosamine + NADPH + H(+). It functions in the pathway cell wall biogenesis; peptidoglycan biosynthesis. In terms of biological role, cell wall formation. This chain is UDP-N-acetylenolpyruvoylglucosamine reductase, found in Rickettsia bellii (strain OSU 85-389).